The following is a 270-amino-acid chain: Fluoride-specific ion channel FluC 2 (270 aa).

Helical transmembrane passes span 4-24 (IIIL…FIML), 35-55 (LDIL…TALY), 67-87 (IIGT…YGSV), and 96-116 (AFLI…VAVL). Na(+) contacts are provided by glycine 74 and serine 77.

It belongs to the fluoride channel Fluc/FEX (TC 1.A.43) family.

The protein localises to the cell inner membrane. It catalyses the reaction fluoride(in) = fluoride(out). With respect to regulation, na(+) is not transported, but it plays an essential structural role and its presence is essential for fluoride channel function. In terms of biological role, fluoride-specific ion channel. Important for reducing fluoride concentration in the cell, thus reducing its toxicity. This is Fluoride-specific ion channel FluC 2 from Brucella melitensis biotype 1 (strain ATCC 23456 / CCUG 17765 / NCTC 10094 / 16M).